The following is a 336-amino-acid chain: Phytochrome A-associated F-box protein (336 aa).

In terms of domain architecture, F-box spans 3-55 (ESVFSCIPEDVVFNIFFKLQDDPRNWARLACVCTKFSSIVRNVCCKTQCYSAI). A Nuclear localization signal motif is present at residues 197–201 (RKRRK).

As to quaternary structure, probable component of an E3 ubiquitin ligase SCF complex. Interacts with SKP1A/ASK1 and SKP1B/ASK2.

It localises to the nucleus. Its pathway is protein modification; protein ubiquitination. Its function is as follows. Component of SCF(ASK-cullin-F-box) E3 ubiquitin ligase complexes, which may mediate the ubiquitination and subsequent proteasomal degradation of target proteins. Negative regulator of the phyA signaling pathway that shifts the responsiveness of the phyA signaling system associated with hypocotyl elongation from red to far-red wavelength. This Arabidopsis thaliana (Mouse-ear cress) protein is Phytochrome A-associated F-box protein (EID1).